The sequence spans 443 residues: Phosphoglucosamine mutase (443 aa).

Ser100 acts as the Phosphoserine intermediate in catalysis. Residues Ser100, Asp240, Asp242, and Asp244 each contribute to the Mg(2+) site. The residue at position 100 (Ser100) is a Phosphoserine.

It belongs to the phosphohexose mutase family. Mg(2+) is required as a cofactor. In terms of processing, activated by phosphorylation.

It carries out the reaction alpha-D-glucosamine 1-phosphate = D-glucosamine 6-phosphate. In terms of biological role, catalyzes the conversion of glucosamine-6-phosphate to glucosamine-1-phosphate. The polypeptide is Phosphoglucosamine mutase (Carboxydothermus hydrogenoformans (strain ATCC BAA-161 / DSM 6008 / Z-2901)).